A 477-amino-acid polypeptide reads, in one-letter code: Maternal protein exuperantia-2 (477 aa).

Positions 196-209 are enriched in basic and acidic residues; that stretch reads KDGNSTKEDEHENP. 2 disordered regions span residues 196–226 and 384–477; these read KDGN…NQKQ and TIKP…FADI. Positions 385 to 402 are enriched in basic residues; sequence IKPRCKRSGNGTRRRNRA.

Ensures the proper localization of the mRNA of the bicoid gene to the anterior regions of the oocyte thus playing a fundamental role in the establishment of the polarity of the oocyte. May bind the bcd mRNA. This chain is Maternal protein exuperantia-2 (exu2), found in Drosophila pseudoobscura pseudoobscura (Fruit fly).